The sequence spans 367 residues: Alanine racemase (367 aa).

Residue K40 is the Proton acceptor; specific for D-alanine of the active site. K40 carries the post-translational modification N6-(pyridoxal phosphate)lysine. Position 136 (R136) interacts with substrate. The active-site Proton acceptor; specific for L-alanine is Y263. M310 provides a ligand contact to substrate.

This sequence belongs to the alanine racemase family. Pyridoxal 5'-phosphate is required as a cofactor.

It carries out the reaction L-alanine = D-alanine. It participates in amino-acid biosynthesis; D-alanine biosynthesis; D-alanine from L-alanine: step 1/1. Catalyzes the interconversion of L-alanine and D-alanine. May also act on other amino acids. This is Alanine racemase (alr) from Streptococcus pneumoniae serotype 19F (strain G54).